Here is a 982-residue protein sequence, read N- to C-terminus: NACHT, LRR and PYD domains-containing protein 4C (982 aa).

A Pyrin domain is found at 1 to 93 (MASFFSDFGL…MERAGREIAG (93 aa)). The NACHT domain maps to 148–471 (HMVFLQGAAG…FYLLKSHMDH (324 aa)). Position 154–161 (154–161 (GAAGIGKS)) interacts with ATP. 7 LRR repeats span residues 594-617 (CSTLKKLSLSTQNVLSEGQEHSYT), 689-716 (NQCLQHLDLNLTFLSHGDVKLLCDVLSQ), 746-773 (SKMLKHLNLSSNNLDKGISSLSKALCHP), 802-825 (NKTLNHLDISSNDLKDEGLKVLCG), 827-844 (LSLPDSVLKSLSVRYCLI), 859-882 (NQNLRNLQVSNNKIEDAGVKLLCD), and 916-940 (CKTLWGINLQENALDHSGLIVLFEA).

Belongs to the NLRP family.

Functionally, may be involved in inflammation and recognition of cytosolic pathogen-associated molecular patterns (PAMPs) not intercepted by membrane-bound receptors. The polypeptide is NACHT, LRR and PYD domains-containing protein 4C (Nlrp4c) (Mus musculus (Mouse)).